Reading from the N-terminus, the 405-residue chain is NADH-quinone oxidoreductase subunit D (405 aa).

Belongs to the complex I 49 kDa subunit family. As to quaternary structure, NDH-1 is composed of 14 different subunits. Subunits NuoB, C, D, E, F, and G constitute the peripheral sector of the complex.

It localises to the cell inner membrane. It carries out the reaction a quinone + NADH + 5 H(+)(in) = a quinol + NAD(+) + 4 H(+)(out). In terms of biological role, NDH-1 shuttles electrons from NADH, via FMN and iron-sulfur (Fe-S) centers, to quinones in the respiratory chain. The immediate electron acceptor for the enzyme in this species is believed to be ubiquinone. Couples the redox reaction to proton translocation (for every two electrons transferred, four hydrogen ions are translocated across the cytoplasmic membrane), and thus conserves the redox energy in a proton gradient. In Afipia carboxidovorans (strain ATCC 49405 / DSM 1227 / KCTC 32145 / OM5) (Oligotropha carboxidovorans), this protein is NADH-quinone oxidoreductase subunit D.